The following is a 200-amino-acid chain: NADH-quinone oxidoreductase subunit C (200 aa).

The protein belongs to the complex I 30 kDa subunit family. NDH-1 is composed of 14 different subunits. Subunits NuoB, C, D, E, F, and G constitute the peripheral sector of the complex.

The protein resides in the cell inner membrane. The enzyme catalyses a quinone + NADH + 5 H(+)(in) = a quinol + NAD(+) + 4 H(+)(out). In terms of biological role, NDH-1 shuttles electrons from NADH, via FMN and iron-sulfur (Fe-S) centers, to quinones in the respiratory chain. The immediate electron acceptor for the enzyme in this species is believed to be ubiquinone. Couples the redox reaction to proton translocation (for every two electrons transferred, four hydrogen ions are translocated across the cytoplasmic membrane), and thus conserves the redox energy in a proton gradient. This is NADH-quinone oxidoreductase subunit C from Parvibaculum lavamentivorans (strain DS-1 / DSM 13023 / NCIMB 13966).